The sequence spans 74 residues: uncharacterized protein (74 aa).

A helical transmembrane segment spans residues 7–26 (IHLYVMASAMSSSPIFFFFQ).

The protein localises to the membrane. This is an uncharacterized protein from Homo sapiens (Human).